We begin with the raw amino-acid sequence, 591 residues long: MAQESADLASDCQSWLQKLSAWEQASSEETQKDTCLHLSGFQEFLRQMYEILKEMDSDAILERFPTIGQLLAKACWNPLILAYDESQKIVIWCLCCLMNKEPRTSAESGLNSWIRGLLSHVLSAFRFDMKEVCLFTKSLGYESIDYYPSLLKNMVLSLVSELRESHLNGLSTQSRMAPERMMSLSEVCVPLVTLPDMEPLVEALLTYHGHEPQEVLAPEFFEAVNEAFLSEKIVLPTSSVVSLWFRHLPSLEKATLHLFEKLFSSKIICLRRMECCIRESFLPQAACQPAIFRIVDEMFRFVLLETDGAPEVLAALQVFTSCLVEALKKENKQLTFALRTYFPYGAPCLAAALSQHPEAIPQGHRLQPLLHISQLLREAVEDCTRGSPRNPFESWFLFVHFGGWVDLAVAELLLREEAEPPAGLLWLLVFYYSPQDGSQQREQSMVELKVLINRLLMLLRSGPLSATDLQEAAESPSGDPRPPVCGQLVRRLLLSLLLWTPEGHAIVWEAVTHGPTFEITGPGCCPRIWRSTRPQHRPRAHLCCTEMAHTDAVIHEIIGFLDQTLYRSQHLCVEASRKLARDLLKELQAQV.

As to quaternary structure, belongs to the multisubunit FA complex composed of FANCA, FANCB, FANCC, FANCE, FANCF, FANCG, FANCL/PHF9 and FANCM. This complex may also include HSP70. Interacts with ZBTB32. Upon IFNG induction, interacts with STAT1. Interacts with CDK1. Interacts with EIF2AK2. As to expression, ubiquitous.

The protein localises to the nucleus. It is found in the cytoplasm. In terms of biological role, DNA repair protein that may operate in a postreplication repair or a cell cycle checkpoint function. May be implicated in interstrand DNA cross-link repair and in the maintenance of normal chromosome stability. Upon IFNG induction, may facilitate STAT1 activation by recruiting STAT1 to IFNGR1. The polypeptide is Fanconi anemia group C protein homolog (Fancc) (Mus musculus (Mouse)).